Consider the following 103-residue polypeptide: Cell division suppressor protein YneA (103 aa).

In terms of domain architecture, LysM spans 36-87 (VKIEVQSGDTLWGLADQVNDSKSIDKNAFIDWVTQHNDLASTEIQPGDILVI).

It belongs to the YneA family.

It localises to the cytoplasm. Functionally, inhibits cell division during the SOS response. Affects a later stage of the cell division protein assembly, after the assembly of the Z ring, by probably suppressing recruitment of FtsL and/or DivIC to the division machinery. In Bacillus pumilus (strain SAFR-032), this protein is Cell division suppressor protein YneA.